Consider the following 385-residue polypeptide: 8-amino-7-oxononanoate synthase (385 aa).

Arg21 lines the substrate pocket. Residue 108–109 (GF) participates in pyridoxal 5'-phosphate binding. Position 133 (His133) interacts with substrate. Ser179, His207, and Thr233 together coordinate pyridoxal 5'-phosphate. Position 236 is an N6-(pyridoxal phosphate)lysine (Lys236). Thr352 contributes to the substrate binding site.

This sequence belongs to the class-II pyridoxal-phosphate-dependent aminotransferase family. BioF subfamily. In terms of assembly, homodimer. Pyridoxal 5'-phosphate is required as a cofactor.

It catalyses the reaction 6-carboxyhexanoyl-[ACP] + L-alanine + H(+) = (8S)-8-amino-7-oxononanoate + holo-[ACP] + CO2. It functions in the pathway cofactor biosynthesis; biotin biosynthesis. In terms of biological role, catalyzes the decarboxylative condensation of pimeloyl-[acyl-carrier protein] and L-alanine to produce 8-amino-7-oxononanoate (AON), [acyl-carrier protein], and carbon dioxide. The sequence is that of 8-amino-7-oxononanoate synthase from Salmonella paratyphi A (strain ATCC 9150 / SARB42).